The chain runs to 30 residues: Cycloviolacin-O24 (30 aa).

Residues 1 to 30 (GLPTCGETCFGGTCNTPGCTCDPWPVCTHN) constitute a cross-link (cyclopeptide (Gly-Asn)). 3 cysteine pairs are disulfide-bonded: Cys5–Cys19, Cys9–Cys21, and Cys14–Cys27.

This is a cyclic peptide. As to expression, expressed in leaves but not in petals, petioles, roots and runners (at protein level).

Its function is as follows. Probably participates in a plant defense mechanism. Has hemolytic activity. The polypeptide is Cycloviolacin-O24 (Viola odorata (Sweet violet)).